Here is a 157-residue protein sequence, read N- to C-terminus: 2-C-methyl-D-erythritol 2,4-cyclodiphosphate synthase (157 aa).

D9 and H11 together coordinate a divalent metal cation. 4-CDP-2-C-methyl-D-erythritol 2-phosphate contacts are provided by residues D9 to H11 and H35 to S36. H43 contributes to the a divalent metal cation binding site. 4-CDP-2-C-methyl-D-erythritol 2-phosphate-binding positions include D57–G59, F62–D66, A101–A107, T133–E136, F140, and R143.

The protein belongs to the IspF family. In terms of assembly, homotrimer. The cofactor is a divalent metal cation.

The catalysed reaction is 4-CDP-2-C-methyl-D-erythritol 2-phosphate = 2-C-methyl-D-erythritol 2,4-cyclic diphosphate + CMP. Its pathway is isoprenoid biosynthesis; isopentenyl diphosphate biosynthesis via DXP pathway; isopentenyl diphosphate from 1-deoxy-D-xylulose 5-phosphate: step 4/6. Functionally, involved in the biosynthesis of isopentenyl diphosphate (IPP) and dimethylallyl diphosphate (DMAPP), two major building blocks of isoprenoid compounds. Catalyzes the conversion of 4-diphosphocytidyl-2-C-methyl-D-erythritol 2-phosphate (CDP-ME2P) to 2-C-methyl-D-erythritol 2,4-cyclodiphosphate (ME-CPP) with a corresponding release of cytidine 5-monophosphate (CMP). This chain is 2-C-methyl-D-erythritol 2,4-cyclodiphosphate synthase, found in Listeria monocytogenes serovar 1/2a (strain ATCC BAA-679 / EGD-e).